The sequence spans 23 residues: U3-ctenitoxin-Co1a (23 aa).

2 disulfides stabilise this stretch: cysteine 2–cysteine 17 and cysteine 9–cysteine 22.

Expressed by the venom gland.

It localises to the secreted. Antagonist of L-type calcium channels (Cav1/CACNA1). The protein is U3-ctenitoxin-Co1a of Ctenus ornatus (Brazilian spider).